The chain runs to 553 residues: Putative transport protein KPK_0013 (553 aa).

5 helical membrane-spanning segments follow: residues isoleucine 4–valine 24, glycine 28–aspartate 48, phenylalanine 65–serine 85, leucine 95–phenylalanine 115, and methionine 158–valine 178. 2 RCK C-terminal domains span residues arginine 192–glutamine 276 and alanine 279–asparagine 361. The next 6 membrane-spanning stretches (helical) occupy residues methionine 371–isoleucine 391, alanine 403–phenylalanine 425, leucine 437–threonine 457, leucine 464–leucine 484, tyrosine 493–alanine 513, and proline 532–leucine 552.

This sequence belongs to the AAE transporter (TC 2.A.81) family. YidE subfamily.

It localises to the cell membrane. The polypeptide is Putative transport protein KPK_0013 (Klebsiella pneumoniae (strain 342)).